A 362-amino-acid chain; its full sequence is Adenosine deaminase (362 aa).

Residues H19 and H21 each coordinate Zn(2+). Substrate is bound by residues H21, D23, and G181. Residue H208 coordinates Zn(2+). The Proton donor role is filled by E211. D300 serves as a coordination point for Zn(2+).

Belongs to the metallo-dependent hydrolases superfamily. Adenosine and AMP deaminases family. Adenosine deaminase subfamily. Zn(2+) is required as a cofactor.

It carries out the reaction adenosine + H2O + H(+) = inosine + NH4(+). The catalysed reaction is 2'-deoxyadenosine + H2O + H(+) = 2'-deoxyinosine + NH4(+). Catalyzes the hydrolytic deamination of adenosine and 2-deoxyadenosine. The protein is Adenosine deaminase of Mycobacterium sp. (strain JLS).